Reading from the N-terminus, the 168-residue chain is Peptide deformylase (168 aa).

Residues cysteine 92 and histidine 134 each coordinate Fe cation. Residue glutamate 135 is part of the active site. Fe cation is bound at residue histidine 138.

Belongs to the polypeptide deformylase family. Fe(2+) is required as a cofactor.

The catalysed reaction is N-terminal N-formyl-L-methionyl-[peptide] + H2O = N-terminal L-methionyl-[peptide] + formate. Functionally, removes the formyl group from the N-terminal Met of newly synthesized proteins. Requires at least a dipeptide for an efficient rate of reaction. N-terminal L-methionine is a prerequisite for activity but the enzyme has broad specificity at other positions. In Pseudomonas aeruginosa (strain ATCC 15692 / DSM 22644 / CIP 104116 / JCM 14847 / LMG 12228 / 1C / PRS 101 / PAO1), this protein is Peptide deformylase.